A 155-amino-acid chain; its full sequence is Ribosomal RNA large subunit methyltransferase H (155 aa).

Residues Leu-73, Gly-104, and 123 to 128 (LSALTL) each bind S-adenosyl-L-methionine.

It belongs to the RNA methyltransferase RlmH family. As to quaternary structure, homodimer.

Its subcellular location is the cytoplasm. The enzyme catalyses pseudouridine(1915) in 23S rRNA + S-adenosyl-L-methionine = N(3)-methylpseudouridine(1915) in 23S rRNA + S-adenosyl-L-homocysteine + H(+). In terms of biological role, specifically methylates the pseudouridine at position 1915 (m3Psi1915) in 23S rRNA. The sequence is that of Ribosomal RNA large subunit methyltransferase H from Saccharophagus degradans (strain 2-40 / ATCC 43961 / DSM 17024).